The following is a 176-amino-acid chain: Envelope protein 167 (176 aa).

A topological domain (intravirion) is located at residue M1. Residues 2 to 22 form a helical membrane-spanning segment; sequence YLVLLIAIILFITIILVIFLI. At 23–176 the chain is on the virion surface side; it reads SGLFYPEQNP…AVMAIPRKVL (154 aa).

Belongs to the asfivirus envelope protein p22 family.

The protein localises to the virion membrane. It localises to the host cell membrane. This is Envelope protein 167 from African swine fever virus (isolate Warthog/Namibia/Wart80/1980) (ASFV).